A 149-amino-acid chain; its full sequence is Chromophore lyase CpcS/CpeS homolog (149 aa).

Belongs to the CpcS/CpeS biliprotein lyase family.

It localises to the plastid. It is found in the chloroplast. In terms of biological role, might function to covalently attach a chromophore to Cys residue(s) of phycobiliproteins. This is Chromophore lyase CpcS/CpeS homolog from Porphyra purpurea (Red seaweed).